A 184-amino-acid chain; its full sequence is NADH-quinone oxidoreductase subunit B (184 aa).

The [4Fe-4S] cluster site is built by C37, C38, C103, and C132.

The protein belongs to the complex I 20 kDa subunit family. In terms of assembly, NDH-1 is composed of 14 different subunits. Subunits NuoB, C, D, E, F, and G constitute the peripheral sector of the complex. It depends on [4Fe-4S] cluster as a cofactor.

The protein localises to the cell membrane. It catalyses the reaction a quinone + NADH + 5 H(+)(in) = a quinol + NAD(+) + 4 H(+)(out). In terms of biological role, NDH-1 shuttles electrons from NADH, via FMN and iron-sulfur (Fe-S) centers, to quinones in the respiratory chain. The immediate electron acceptor for the enzyme in this species is believed to be a menaquinone. Couples the redox reaction to proton translocation (for every two electrons transferred, four hydrogen ions are translocated across the cytoplasmic membrane), and thus conserves the redox energy in a proton gradient. This chain is NADH-quinone oxidoreductase subunit B, found in Nocardia farcinica (strain IFM 10152).